The chain runs to 330 residues: Aspartate--ammonia ligase (330 aa).

It belongs to the class-II aminoacyl-tRNA synthetase family. AsnA subfamily.

It is found in the cytoplasm. The enzyme catalyses L-aspartate + NH4(+) + ATP = L-asparagine + AMP + diphosphate + H(+). It participates in amino-acid biosynthesis; L-asparagine biosynthesis; L-asparagine from L-aspartate (ammonia route): step 1/1. The protein is Aspartate--ammonia ligase of Yersinia enterocolitica serotype O:8 / biotype 1B (strain NCTC 13174 / 8081).